Here is an 828-residue protein sequence, read N- to C-terminus: Phenylalanine--tRNA ligase beta subunit (828 aa).

The tRNA-binding domain occupies 44–155 (GPVDGPLTVG…GTAEPGADGA (112 aa)). Residues 411–486 (WSPPAIQMPA…RLEGLEVIGS (76 aa)) enclose the B5 domain. Aspartate 464, aspartate 470, glutamate 473, and glutamate 474 together coordinate Mg(2+). One can recognise an FDX-ACB domain in the interval 734 to 827 (SPFPAVFQDV…AAEAVGAELR (94 aa)).

The protein belongs to the phenylalanyl-tRNA synthetase beta subunit family. Type 1 subfamily. Tetramer of two alpha and two beta subunits. Requires Mg(2+) as cofactor.

It is found in the cytoplasm. It catalyses the reaction tRNA(Phe) + L-phenylalanine + ATP = L-phenylalanyl-tRNA(Phe) + AMP + diphosphate + H(+). This is Phenylalanine--tRNA ligase beta subunit from Mycolicibacterium paratuberculosis (strain ATCC BAA-968 / K-10) (Mycobacterium paratuberculosis).